Reading from the N-terminus, the 266-residue chain is 22 kDa alpha-zein 8 (266 aa).

The N-terminal stretch at Met1–Ala21 is a signal peptide.

Belongs to the zein family.

Its function is as follows. Zeins are major seed storage proteins. This Zea mays (Maize) protein is 22 kDa alpha-zein 8.